Reading from the N-terminus, the 345-residue chain is Mycothiol acetyltransferase (345 aa).

N-acetyltransferase domains are found at residues 6 to 149 (DTYE…KAME) and 164 to 345 (FEVL…RGRL). Glu39 is a binding site for 1D-myo-inositol 2-(L-cysteinylamino)-2-deoxy-alpha-D-glucopyranoside. 76–78 (LAV) contributes to the acetyl-CoA binding site. Glu198, Lys261, and Glu277 together coordinate 1D-myo-inositol 2-(L-cysteinylamino)-2-deoxy-alpha-D-glucopyranoside. Acetyl-CoA-binding positions include 281 to 283 (VCL) and 288 to 294 (RGRGLGQ). 1D-myo-inositol 2-(L-cysteinylamino)-2-deoxy-alpha-D-glucopyranoside is bound at residue Tyr315.

This sequence belongs to the acetyltransferase family. MshD subfamily. As to quaternary structure, monomer.

It carries out the reaction 1D-myo-inositol 2-(L-cysteinylamino)-2-deoxy-alpha-D-glucopyranoside + acetyl-CoA = mycothiol + CoA + H(+). In terms of biological role, catalyzes the transfer of acetyl from acetyl-CoA to desacetylmycothiol (Cys-GlcN-Ins) to form mycothiol. The chain is Mycothiol acetyltransferase from Corynebacterium jeikeium (strain K411).